Consider the following 290-residue polypeptide: uncharacterized protein (290 aa).

NAD(+) is bound by residues 7–21 (AVFG…MAQN) and Thr100. The active site involves Lys175. Residue Lys243 coordinates NAD(+).

Belongs to the HIBADH-related family.

This is an uncharacterized protein from Synechocystis sp. (strain ATCC 27184 / PCC 6803 / Kazusa).